A 676-amino-acid chain; its full sequence is UvrABC system protein C (676 aa).

Residues 16-95 (VEPGVYRFRD…IKEFDPRFNI (80 aa)) enclose the GIY-YIG domain. Positions 208-243 (DRLVRDLERKMTAAAEDLDFERAARLRDDIGALRRA) constitute a UVR domain.

The protein belongs to the UvrC family. Interacts with UvrB in an incision complex.

It is found in the cytoplasm. Its function is as follows. The UvrABC repair system catalyzes the recognition and processing of DNA lesions. UvrC both incises the 5' and 3' sides of the lesion. The N-terminal half is responsible for the 3' incision and the C-terminal half is responsible for the 5' incision. In Mycobacterium sp. (strain KMS), this protein is UvrABC system protein C.